An 860-amino-acid polypeptide reads, in one-letter code: Alanine--tRNA ligase (860 aa).

Residues histidine 553, histidine 557, cysteine 655, and histidine 659 each coordinate Zn(2+).

This sequence belongs to the class-II aminoacyl-tRNA synthetase family. It depends on Zn(2+) as a cofactor.

It localises to the cytoplasm. The catalysed reaction is tRNA(Ala) + L-alanine + ATP = L-alanyl-tRNA(Ala) + AMP + diphosphate. Catalyzes the attachment of alanine to tRNA(Ala) in a two-step reaction: alanine is first activated by ATP to form Ala-AMP and then transferred to the acceptor end of tRNA(Ala). Also edits incorrectly charged Ser-tRNA(Ala) and Gly-tRNA(Ala) via its editing domain. This chain is Alanine--tRNA ligase, found in Legionella pneumophila (strain Corby).